Here is a 201-residue protein sequence, read N- to C-terminus: Peptide deformylase (201 aa).

The interval 1–34 (MSLNFAAMARQSERQASTVMVPKGEEQPESPKIH) is disordered. The segment covering 23–32 (KGEEQPESPK) has biased composition (basic and acidic residues). Fe cation-binding residues include C121 and H163. E164 is an active-site residue. H167 provides a ligand contact to Fe cation.

The protein belongs to the polypeptide deformylase family. The cofactor is Fe(2+).

It carries out the reaction N-terminal N-formyl-L-methionyl-[peptide] + H2O = N-terminal L-methionyl-[peptide] + formate. Removes the formyl group from the N-terminal Met of newly synthesized proteins. Requires at least a dipeptide for an efficient rate of reaction. N-terminal L-methionine is a prerequisite for activity but the enzyme has broad specificity at other positions. The sequence is that of Peptide deformylase from Synechococcus sp. (strain RCC307).